The primary structure comprises 1355 residues: Patatin-like phospholipase domain-containing protein 6 (1355 aa).

The Lumenal portion of the chain corresponds to 1–43; it reads MGTPSHELNTTSSGAEVIQKTLEEGLGRRICVAQPVPFVPQVL. An N-linked (GlcNAc...) asparagine glycan is attached at Asn9. Residues 44 to 64 traverse the membrane as a helical segment; it reads GVMIGAGVAVLVTAVLILLVV. Over 65 to 1355 the chain is Cytoplasmic; the sequence is RRLRVQKTPA…QETPSSVADA (1291 aa). 179-306 contacts a nucleoside 3',5'-cyclic phosphate; the sequence is VLGHFEKPLF…VRVVQIIMVR (128 aa). Ser338 is subject to Phosphoserine. The disordered stretch occupies residues 338-395; it reads SPGLPTRTSPVRGSKRVVSTSGTEDTSKETSGRPLDSIGAPLPGPAGDPVKPTSLEAP. Over residues 343–361 the composition is skewed to polar residues; sequence TRTSPVRGSKRVVSTSGTE. Residue Thr345 is modified to Phosphothreonine. 3 positions are modified to phosphoserine: Ser346, Ser356, and Ser405. Residues 492-614 and 610-730 contribute to the a nucleoside 3',5'-cyclic phosphate site; these read ELAK…VAAR and TVAA…LSQK. The 167-residue stretch at 961 to 1127 folds into the PNPLA domain; the sequence is LVLGGGGARG…INNLPADIAR (167 aa). Positions 965 to 970 match the GXGXXG motif; sequence GGGARG. The GXSXG signature appears at 992-996; sequence GTSIG. Ser994 serves as the catalytic Nucleophile. The active-site Proton acceptor is Asp1114. A DGA/G motif is present at residues 1114–1116; the sequence is DGG. The disordered stretch occupies residues 1286–1355; it reads SYVSDGCADG…QETPSSVADA (70 aa). Positions 1293 to 1309 are enriched in acidic residues; the sequence is ADGEESDCLTEYEEDAG.

Belongs to the NTE family. Post-translationally, glycosylated. In terms of tissue distribution, expressed in brain, testes and kidney (at protein level). Expressed ubiquitously in brain of young mice. Reaching adulthood, there is a most prominent expression in Purkinje cells, granule cells and pyramidal neurons of the hippocampus and some large neurons in the medulla oblongata, nucleus dentatus and pons.

It localises to the endoplasmic reticulum membrane. It catalyses the reaction a 1-acyl-sn-glycero-3-phosphocholine + H2O = sn-glycerol 3-phosphocholine + a fatty acid + H(+). It carries out the reaction 1-hexadecanoyl-sn-glycero-3-phosphocholine + H2O = sn-glycerol 3-phosphocholine + hexadecanoate + H(+). The catalysed reaction is 1-hexadecanoyl-sn-glycero-3-phosphate + H2O = sn-glycerol 3-phosphate + hexadecanoate + H(+). The enzyme catalyses 1-(9Z-octadecenoyl)-sn-glycero-3-phosphocholine + H2O = sn-glycerol 3-phosphocholine + (9Z)-octadecenoate + H(+). It catalyses the reaction 1-hexadecanoylglycerol + H2O = glycerol + hexadecanoate + H(+). It carries out the reaction 2-hexadecanoylglycerol + H2O = glycerol + hexadecanoate + H(+). The catalysed reaction is 1-(9Z-octadecenoyl)-glycerol + H2O = glycerol + (9Z)-octadecenoate + H(+). The enzyme catalyses 2-(9Z-octadecenoyl)-glycerol + H2O = glycerol + (9Z)-octadecenoate + H(+). It catalyses the reaction 2-(5Z,8Z,11Z,14Z-eicosatetraenoyl)-glycerol + H2O = glycerol + (5Z,8Z,11Z,14Z)-eicosatetraenoate + H(+). With respect to regulation, inhibited by a series a OPs such as mipafox (MPX), phenyl saligenin phosphate (PSP), phenyl dipentyl phosphinate (PDPP), diisopropyl fluorophosphate and paraoxon. In terms of biological role, phospholipase B that deacylates intracellular phosphatidylcholine (PtdCho), generating glycerophosphocholine (GroPtdCho). This deacylation occurs at both sn-2 and sn-1 positions of PtdCho. Catalyzes the hydrolysis of several naturally occurring membrane-associated lipids. Hydrolyzes lysophospholipids and monoacylglycerols, preferring the 1-acyl to the 2-acyl isomer. Does not catalyze hydrolysis of di- or triacylglycerols or fatty acid amides. The polypeptide is Patatin-like phospholipase domain-containing protein 6 (Pnpla6) (Mus musculus (Mouse)).